The chain runs to 72 residues: Translational regulator CsrA (72 aa).

The protein belongs to the CsrA/RsmA family. As to quaternary structure, homodimer; the beta-strands of each monomer intercalate to form a hydrophobic core, while the alpha-helices form wings that extend away from the core.

It is found in the cytoplasm. Its function is as follows. A translational regulator that binds mRNA to regulate translation initiation and/or mRNA stability. Usually binds in the 5'-UTR at or near the Shine-Dalgarno sequence preventing ribosome-binding, thus repressing translation. Its main target seems to be the major flagellin gene, while its function is anatagonized by FliW. The sequence is that of Translational regulator CsrA from Clostridium botulinum (strain Loch Maree / Type A3).